The chain runs to 201 residues: 3-isopropylmalate dehydratase small subunit (201 aa).

The protein belongs to the LeuD family. LeuD type 1 subfamily. As to quaternary structure, heterodimer of LeuC and LeuD.

It carries out the reaction (2R,3S)-3-isopropylmalate = (2S)-2-isopropylmalate. It participates in amino-acid biosynthesis; L-leucine biosynthesis; L-leucine from 3-methyl-2-oxobutanoate: step 2/4. Functionally, catalyzes the isomerization between 2-isopropylmalate and 3-isopropylmalate, via the formation of 2-isopropylmaleate. The sequence is that of 3-isopropylmalate dehydratase small subunit from Shewanella sp. (strain MR-4).